Reading from the N-terminus, the 577-residue chain is Glycine--tRNA ligase (577 aa).

Substrate contacts are provided by Arg-96 and Glu-161. ATP is bound by residues 193–195 (RNE), 203–208 (IRLREF), 319–320 (EI), and 434–437 (GIDR). 208–212 (FSQAE) contacts substrate. 430–434 (EPSFG) provides a ligand contact to substrate.

Belongs to the class-II aminoacyl-tRNA synthetase family.

The protein resides in the cytoplasm. The enzyme catalyses tRNA(Gly) + glycine + ATP = glycyl-tRNA(Gly) + AMP + diphosphate. Functionally, catalyzes the attachment of glycine to tRNA(Gly). The protein is Glycine--tRNA ligase of Methanothrix thermoacetophila (strain DSM 6194 / JCM 14653 / NBRC 101360 / PT) (Methanosaeta thermophila).